The primary structure comprises 589 residues: MPTIGVKRDLLFEALGKTYTDDEFQDLCFAFGLELDEVTTEKQMLTKEQGDVAAAANASEEIIYRIDIPANRYDLLCLEGLVTGLLVFQGKLKPPKFQFVELAKRQVLKIDPSTAQIRPYAVAAVLRNVTFTQASYNSFIDLQDKLHQNICRKRTLVAIGTHDLDTLQGPFSYEALAPDQIKFKPLNQTKEMTGSELMDFYSTHAQLKQYLPIIRESPVYPVIYDANRVVLSLPPIINGDHSKITLKTKNVFIECTATDRTKAKVVLDTIVCLFSEHCAQKFTVEPCDVVQPDGSVISYPELEVREERISVKRANAYIGIDEPAEKLADMLTRMYLEAKVDGDSLVVKIPPTRHDVIHACDIYEDVAIAYGYNNIKKSLPAFMQIAKQFPLNKLTEQLREQVAQAGFTEALTFTLCSRDDIGRKLNKNIDALPAVHIGNPKTLEFQVVRTTLLPGLLKTLVANRKMPLPLKLFEISDVVVADESTEVGARNERRVCAVNCNKTAGFEVVHGLLDRVMQLLSVPWKSASGTKGYYLQATEDPSYFPGRCANVMYDGVVIGKIGVLHPTVLQAFELTTPCSAVEFTIEPFV.

In terms of domain architecture, B5 spans 302-377; it reads LEVREERISV…IAYGYNNIKK (76 aa). The Mg(2+) site is built by D355, D361, E364, and D365.

It belongs to the phenylalanyl-tRNA synthetase beta subunit family. Type 2 subfamily. In terms of assembly, tetramer of two alpha and two beta subunits. It depends on Mg(2+) as a cofactor.

The protein resides in the cytoplasm. The catalysed reaction is tRNA(Phe) + L-phenylalanine + ATP = L-phenylalanyl-tRNA(Phe) + AMP + diphosphate + H(+). The polypeptide is Phenylalanine--tRNA ligase beta subunit (Drosophila melanogaster (Fruit fly)).